The chain runs to 307 residues: Protoheme IX farnesyltransferase (307 aa).

Transmembrane regions (helical) follow at residues 28 to 48 (VTQL…PGMV), 50 to 70 (WPVL…AFAI), 100 to 120 (ILLF…VFAN), 122 to 142 (LTMW…TLLL), 149 to 169 (NIVI…AAVA), 176 to 196 (AWIL…ALAL), 218 to 238 (FTLL…ILPF), 243 to 263 (SGYL…VHAW), and 282 to 302 (IVYL…KFGP).

Belongs to the UbiA prenyltransferase family. Protoheme IX farnesyltransferase subfamily.

It localises to the cell inner membrane. It carries out the reaction heme b + (2E,6E)-farnesyl diphosphate + H2O = Fe(II)-heme o + diphosphate. It participates in porphyrin-containing compound metabolism; heme O biosynthesis; heme O from protoheme: step 1/1. Its function is as follows. Converts heme B (protoheme IX) to heme O by substitution of the vinyl group on carbon 2 of heme B porphyrin ring with a hydroxyethyl farnesyl side group. This chain is Protoheme IX farnesyltransferase, found in Ralstonia nicotianae (strain ATCC BAA-1114 / GMI1000) (Ralstonia solanacearum).